The primary structure comprises 62 residues: DNA-binding protein 7 (62 aa).

This sequence belongs to the 7 kDa DNA-binding/endoribonuclease P2 family. As to quaternary structure, monomer.

It is found in the cytoplasm. Its function is as follows. Can constrain negative DNA supercoils. May be involved in maintaining the integrity of the genome at high temperature. In Metallosphaera cuprina (strain Ar-4), this protein is DNA-binding protein 7.